The primary structure comprises 382 residues: Putative glutamate--cysteine ligase 2-1 (382 aa).

This sequence belongs to the glutamate--cysteine ligase type 2 family. YbdK subfamily.

The catalysed reaction is L-cysteine + L-glutamate + ATP = gamma-L-glutamyl-L-cysteine + ADP + phosphate + H(+). Its function is as follows. ATP-dependent carboxylate-amine ligase which exhibits weak glutamate--cysteine ligase activity. The protein is Putative glutamate--cysteine ligase 2-1 of Frankia alni (strain DSM 45986 / CECT 9034 / ACN14a).